Consider the following 157-residue polypeptide: Transcription elongation factor GreA (157 aa).

Residues 1-75 (MSKEIILTQE…VETLINRAKV (75 aa)) are a coiled coil.

It belongs to the GreA/GreB family.

Necessary for efficient RNA polymerase transcription elongation past template-encoded arresting sites. The arresting sites in DNA have the property of trapping a certain fraction of elongating RNA polymerases that pass through, resulting in locked ternary complexes. Cleavage of the nascent transcript by cleavage factors such as GreA or GreB allows the resumption of elongation from the new 3'terminus. GreA releases sequences of 2 to 3 nucleotides. The polypeptide is Transcription elongation factor GreA (Mycoplasma mycoides subsp. mycoides SC (strain CCUG 32753 / NCTC 10114 / PG1)).